The chain runs to 1597 residues: Rho guanine nucleotide exchange factor 5 (1597 aa).

3 disordered regions span residues 138-246, 258-455, and 467-1072; these read PFSS…EGTL, EEQM…SLEP, and GSFL…VFRE. Position 184 is a phosphoserine (Ser-184). Residues 192–204 show a composition bias toward polar residues; the sequence is ETNQNEGSESGTI. The segment covering 217–237 has biased composition (low complexity); sequence ESQGLLHPQEVQVLEEQGQQE. Residues 266–278 show a composition bias toward basic and acidic residues; that stretch reads NDEKGEQKQKQEQ. The span at 299–309 shows a compositional bias: acidic residues; it reads GLNDGEWEQED. Basic and acidic residues-rich tracts occupy residues 323-368 and 394-404; these read GEER…KEKG and RSREEENEHHG. The segment covering 428-438 has biased composition (polar residues); that stretch reads LMTQIPGTQTE. Ser-445 and Ser-450 each carry phosphoserine. A compositionally biased stretch (basic and acidic residues) spans 474–490; sequence SPDKEIDQNSQQEESRL. A compositionally biased stretch (pro residues) spans 512–522; it reads PRTPDSAPPSP. 2 stretches are compositionally biased toward polar residues: residues 583–601 and 655–682; these read STGT…TVQH and DYST…NLER. Positions 731–746 are enriched in basic and acidic residues; the sequence is QRRDTHPSVVETDGHA. 2 stretches are compositionally biased toward pro residues: residues 812–828 and 838–856; these read PLPP…PPIS and PLPP…PLPP. Arg-866 is modified (asymmetric dimethylarginine). The span at 901–920 shows a compositional bias: low complexity; sequence ATARSTESFTSTSRSKSEVS. A compositionally biased stretch (polar residues) spans 926–941; the sequence is SNMTNFLCPSSPTTPW. Basic and acidic residues predominate over residues 950–969; it reads SKDEAGVSEHPEAPAREPLR. A phosphoserine mark is found at Ser-983, Ser-1011, and Ser-1044. Basic and acidic residues predominate over residues 990 to 1012; that stretch reads QPEKPSHLHLEKASSWPHRRDSG. The segment covering 1057-1072 has biased composition (basic and acidic residues); sequence AVEKHPGPSDTVVFRE. Ser-1126 bears the Phosphoserine mark. Positions 1174-1358 constitute a DH domain; sequence KLQEVKFELI…EQLIRDCNNN (185 aa). The PH domain maps to 1390-1502; the sequence is WLVKSGELTA…WISALAMPRE (113 aa). One can recognise an SH3 domain in the interval 1510–1571; sequence YNSPQVQCLR…PVQQVEFISN (62 aa).

Interacts with SRC. Forms a ternary complex with SRC and the PI3K 85 kDa subunit. Interacts with and is activated by the heterodimer formed by GNB1 and GNG2. Interacts with ODAM (via C-terminus). Interacts with RHOA. Activation of SRC induces tyrosine phosphorylation of ARHGEF5. In terms of tissue distribution, ubiquitously expressed with highest levels in placenta. High levels are also found in colon, kidney, trachea, prostate, liver, pancreas, pituitary gland, thyroid gland and mammary gland. In fetal tissues, expressed at high levels in kidney, lung and liver. Expressed at low levels in lung and heart.

Its subcellular location is the cytoplasm. The protein resides in the nucleus. It localises to the cell projection. It is found in the podosome. In terms of biological role, guanine nucleotide exchange factor which activates Rho GTPases. Strongly activates RHOA. Also strongly activates RHOB, weakly activates RHOC and RHOG and shows no effect on RHOD, RHOV, RHOQ or RAC1. Involved in regulation of cell shape and actin cytoskeletal organization. Plays a role in actin organization by generating a loss of actin stress fibers and the formation of membrane ruffles and filopodia. Required for SRC-induced podosome formation. Involved in positive regulation of immature dendritic cell migration. This Homo sapiens (Human) protein is Rho guanine nucleotide exchange factor 5 (ARHGEF5).